The primary structure comprises 124 residues: Probable S-adenosyl-L-methionine-binding protein VNG_1115H (124 aa).

A TsaA-like domain is found at 3-124; the sequence is ATPIGYADTR…PVLDLKPALD (122 aa). Residues 20–22, 58–59, Arg-78, and 111–114 each bind S-adenosyl-L-methionine; these read PRQ, DD, and AHGS.

The protein belongs to the tRNA methyltransferase O family.

The chain is Probable S-adenosyl-L-methionine-binding protein VNG_1115H from Halobacterium salinarum (strain ATCC 700922 / JCM 11081 / NRC-1) (Halobacterium halobium).